The chain runs to 404 residues: MREAPHVLGIVLAGGEGKRLYPLTADRAKPAVPFGGGYRLIDFVLSNLVNARFLRICVLTQYKSHSLDRHISQNWRLSGLAGEYITPVPAQQRLGPRWYTGSADAIYQSMNLIYDEDPDYIVIFGADHVYRMDPEQMVQQHIESGAGATVAGIRVPRAEASAFGCIDSDDSGRIRGFIEKPADPPGTPDDPEQTFVSMGNYIFTTKVLIDAIRADAEDDDSDHDMGGDIIPRLVADGMAAVYDFNDNEVPGATERDHGYWRDVGTLDAFYDAHMDLVSVHPVFNLYNKRWPIRGGAENLAPAKFVNGGSAQESVVGAGSIISAASVRNSVLSSNVVIDDGAIVEGSVIMPGARIGRGAVVRHAILDKNVVVGPGEMVGVDLDKDRERFSISAGGVVAVGKGVWI.

Alpha-D-glucose 1-phosphate is bound by residues tyrosine 99, glycine 164, 179-180 (EK), and serine 197.

The protein belongs to the bacterial/plant glucose-1-phosphate adenylyltransferase family.

It catalyses the reaction alpha-D-glucose 1-phosphate + ATP + H(+) = ADP-alpha-D-glucose + diphosphate. It functions in the pathway glycan biosynthesis; glycogen biosynthesis. Functionally, involved in the biosynthesis of ADP-glucose, a building block, required in the biosynthesis of maltose-1-phosphate (M1P) and in the elongation reactions to produce linear alpha-1,4-glucans. Catalyzes the reaction between ATP and alpha-D-glucose 1-phosphate (G1P) to produce pyrophosphate and ADP-Glc. The protein is Glucose-1-phosphate adenylyltransferase of Mycolicibacterium vanbaalenii (strain DSM 7251 / JCM 13017 / BCRC 16820 / KCTC 9966 / NRRL B-24157 / PYR-1) (Mycobacterium vanbaalenii).